The following is a 75-amino-acid chain: Exodeoxyribonuclease 7 small subunit (75 aa).

It belongs to the XseB family. In terms of assembly, heterooligomer composed of large and small subunits.

It localises to the cytoplasm. The catalysed reaction is Exonucleolytic cleavage in either 5'- to 3'- or 3'- to 5'-direction to yield nucleoside 5'-phosphates.. Bidirectionally degrades single-stranded DNA into large acid-insoluble oligonucleotides, which are then degraded further into small acid-soluble oligonucleotides. This is Exodeoxyribonuclease 7 small subunit from Chlamydia felis (strain Fe/C-56) (Chlamydophila felis).